The following is a 62-amino-acid chain: Large ribosomal subunit protein uL29 (62 aa).

The protein belongs to the universal ribosomal protein uL29 family.

This is Large ribosomal subunit protein uL29 from Trichlorobacter lovleyi (strain ATCC BAA-1151 / DSM 17278 / SZ) (Geobacter lovleyi).